Reading from the N-terminus, the 161-residue chain is Cyclic pyranopterin monophosphate synthase (161 aa).

Substrate-binding positions include 75-77 (MCH) and 115-116 (ME). D130 is an active-site residue.

This sequence belongs to the MoaC family. In terms of assembly, homohexamer; trimer of dimers.

It catalyses the reaction (8S)-3',8-cyclo-7,8-dihydroguanosine 5'-triphosphate = cyclic pyranopterin phosphate + diphosphate. The protein operates within cofactor biosynthesis; molybdopterin biosynthesis. Its function is as follows. Catalyzes the conversion of (8S)-3',8-cyclo-7,8-dihydroguanosine 5'-triphosphate to cyclic pyranopterin monophosphate (cPMP). The protein is Cyclic pyranopterin monophosphate synthase of Bacillus cereus (strain G9842).